Consider the following 333-residue polypeptide: Dehydrodolichyl diphosphate synthase complex subunit Dhdds (333 aa).

(2E,6E)-farnesyl diphosphate-binding residues include D34, G35, R37, R38, and R85. A Mg(2+)-binding site is contributed by D34. Isopentenyl diphosphate contacts are provided by R38, R85, R205, R211, and S213.

It belongs to the UPP synthase family. As to quaternary structure, the active dehydrodolichyl diphosphate synthase complex is a heterotetramer composed of a dimer of heterodimer of DHDDS and NUS1. Interacts with NPC2. Mg(2+) serves as cofactor.

It localises to the endoplasmic reticulum membrane. The catalysed reaction is n isopentenyl diphosphate + (2E,6E)-farnesyl diphosphate = a di-trans,poly-cis-polyprenyl diphosphate + n diphosphate. Its pathway is protein modification; protein glycosylation. It participates in lipid metabolism. With NUS1, forms the dehydrodolichyl diphosphate synthase (DDS) complex, an essential component of the dolichol monophosphate (Dol-P) biosynthetic machinery. Both subunits contribute to enzymatic activity, i.e. condensation of multiple copies of isopentenyl pyrophosphate (IPP) to farnesyl pyrophosphate (FPP) to produce dehydrodolichyl diphosphate (Dedol-PP), a precursor of dolichol phosphate which is utilized as a sugar carrier in protein glycosylation in the endoplasmic reticulum (ER). Synthesizes long-chain polyprenols, mostly of C95 and C100 chain length. Regulates the glycosylation and stability of nascent NPC2, thereby promoting trafficking of LDL-derived cholesterol. In Mus musculus (Mouse), this protein is Dehydrodolichyl diphosphate synthase complex subunit Dhdds.